The following is a 427-amino-acid chain: Gamma-glutamyl phosphate reductase (427 aa).

Belongs to the gamma-glutamyl phosphate reductase family.

It localises to the cytoplasm. The catalysed reaction is L-glutamate 5-semialdehyde + phosphate + NADP(+) = L-glutamyl 5-phosphate + NADPH + H(+). It participates in amino-acid biosynthesis; L-proline biosynthesis; L-glutamate 5-semialdehyde from L-glutamate: step 2/2. Catalyzes the NADPH-dependent reduction of L-glutamate 5-phosphate into L-glutamate 5-semialdehyde and phosphate. The product spontaneously undergoes cyclization to form 1-pyrroline-5-carboxylate. This Brucella anthropi (strain ATCC 49188 / DSM 6882 / CCUG 24695 / JCM 21032 / LMG 3331 / NBRC 15819 / NCTC 12168 / Alc 37) (Ochrobactrum anthropi) protein is Gamma-glutamyl phosphate reductase.